The primary structure comprises 156 residues: MIVYGLYKSPFGPITVAKNEKGFVMLDFCDCAERSSLDNDYFTDFFYKLDLYFEGKKVDLTEPVDFKPFNEFRIRVFKEVMRIKWGEVRTYKQVADAVKTSPRAVGTALSKNNVLLIIPCHRVIGEKSLGGYSRGVELKRKLLELEGIDVAKFIEK.

Cys120 acts as the Nucleophile; methyl group acceptor in catalysis.

This sequence belongs to the MGMT family.

Its subcellular location is the cytoplasm. The catalysed reaction is a 6-O-methyl-2'-deoxyguanosine in DNA + L-cysteinyl-[protein] = S-methyl-L-cysteinyl-[protein] + a 2'-deoxyguanosine in DNA. It carries out the reaction a 4-O-methyl-thymidine in DNA + L-cysteinyl-[protein] = a thymidine in DNA + S-methyl-L-cysteinyl-[protein]. In terms of biological role, involved in the cellular defense against the biological effects of O6-methylguanine (O6-MeG) and O4-methylthymine (O4-MeT) in DNA. Repairs the methylated nucleobase in DNA by stoichiometrically transferring the methyl group to a cysteine residue in the enzyme. This is a suicide reaction: the enzyme is irreversibly inactivated. The polypeptide is Methylated-DNA--protein-cysteine methyltransferase (Sulfurisphaera tokodaii (strain DSM 16993 / JCM 10545 / NBRC 100140 / 7) (Sulfolobus tokodaii)).